The following is a 1235-amino-acid chain: Serine/threonine-protein kinase TAO2 (1235 aa).

S9 carries the post-translational modification Phosphoserine. In terms of domain architecture, Protein kinase spans 28 to 281; it reads FSDLREIGHG…SEVLLKHRFV (254 aa). Residues 34–42 and K57 contribute to the ATP site; that span reads IGHGSFGAV. 106-108 contributes to the staurosporine binding site; it reads EYC. D151 serves as the catalytic Proton acceptor. G155 contributes to the staurosporine binding site. Phosphoserine is present on S181. Residues 318–457 are disordered; the sequence is QEAPNGPGAE…PTSTSSSSAR (140 aa). Positions 350-374 are enriched in low complexity; sequence SSHSVPSMSISASSQSSSVNSLADA. Positions 375–395 are enriched in acidic residues; that stretch reads SDNEEEEEEEEEEEEEEEEEG. Residues 396 to 411 show a composition bias toward basic and acidic residues; that stretch reads PESREMAMMQEGEHTV. Phosphoserine is present on S416. Coiled coils occupy residues 488–523 and 576–603; these read SALREQLSGYKRMRRQHQKQLLALESRLRGEREEHS and KELAALLEAQKRTYKLRKEQLKEELQEN. S658 carries the post-translational modification Phosphoserine. A coiled-coil region spans residues 683–715; that stretch reads LRQHEATRELELRQLQAVQRTRAELTRLQHQTE. 3 positions are modified to phosphoserine: S777, S825, and S827. The disordered stretch occupies residues 892 to 941; the sequence is GPVLTPVPEEEEEEEEEGGAPIGTPRDPGDGCPSPDIPPEPPPSHLRQYP. The segment covering 899–909 has biased composition (acidic residues); it reads PEEEEEEEEEG. Residues 926–935 show a composition bias toward pro residues; sequence PDIPPEPPPS. Transmembrane regions (helical) follow at residues 967-987, 989-1009, and 1014-1034; these read LLPLLLLLLLPLLAAQGGGGL, AALLALEVGLVGLGASYLFLC, and LPPSLFLLLAQGTALGAVLSL. A Phosphoserine modification is found at R1038. Transmembrane regions (helical) follow at residues 1040–1060 and 1170–1190; these read LMGVPLGLGAAWLLAWPSLAL and LASCLPPWAVHILASWGLLKG. Positions 1210 to 1235 are disordered; that stretch reads SASRQLPPGTVAGRRSQTRRALPPWR.

It belongs to the protein kinase superfamily. STE Ser/Thr protein kinase family. STE20 subfamily. In terms of assembly, self-associates. Interacts with MAP2K3 and MAP2K6. Interacts with tubulins. Interacts with MAP3K7 and interferes with MAP3K7-binding to CHUK and thus prevents NF-kappa-B activation. Isoform 2 interacts with PCDH8; this complex may also include CDH2. The cofactor is Mg(2+). Autophosphorylated. Phosphorylated by ATM. Post-translationally, phosphorylated on Ser-1038 by MAPK14. This phosphorylation is required PCDH8 for endocytosis.

It is found in the cytoplasmic vesicle membrane. The protein localises to the cytoplasm. It localises to the cytoskeleton. The protein resides in the cell projection. Its subcellular location is the dendrite. It catalyses the reaction L-seryl-[protein] + ATP = O-phospho-L-seryl-[protein] + ADP + H(+). The enzyme catalyses L-threonyl-[protein] + ATP = O-phospho-L-threonyl-[protein] + ADP + H(+). Its activity is regulated as follows. Moderately inhibited by staurosporine, a broad-range protein kinase inhibitor. Functionally, serine/threonine-protein kinase involved in different processes such as membrane blebbing and apoptotic bodies formation DNA damage response and MAPK14/p38 MAPK stress-activated MAPK cascade. Phosphorylates itself, MBP, activated MAPK8, MAP2K3, MAP2K6 and tubulins. Activates the MAPK14/p38 MAPK signaling pathway through the specific activation and phosphorylation of the upstream MAP2K3 and MAP2K6 kinases. In response to DNA damage, involved in the G2/M transition DNA damage checkpoint by activating the p38/MAPK14 stress-activated MAPK cascade, probably by mediating phosphorylation of upstream MAP2K3 and MAP2K6 kinases. May affect microtubule organization and stability. May play a role in the osmotic stress-MAPK8 pathway. Prevents MAP3K7-mediated activation of CHUK, and thus NF-kappa-B activation. Isoform 2, but not isoform 1, is required for PCDH8 endocytosis. Following homophilic interactions between PCDH8 extracellular domains, isoform 2 phosphorylates and activates MAPK14/p38 MAPK which in turn phosphorylates isoform 2. This process leads to PCDH8 endocytosis and CDH2 cointernalization. Both isoforms are involved in MAPK14/p38 MAPK activation. The chain is Serine/threonine-protein kinase TAO2 (Taok2) from Rattus norvegicus (Rat).